The sequence spans 249 residues: Phosphatidylserine decarboxylase proenzyme (249 aa).

The active-site Schiff-base intermediate with substrate; via pyruvic acid is S208. Position 208 is a pyruvic acid (Ser); by autocatalysis (S208).

Belongs to the phosphatidylserine decarboxylase family. PSD-A subfamily. In terms of assembly, heterodimer of a large membrane-associated beta subunit and a small pyruvoyl-containing alpha subunit. Requires pyruvate as cofactor. Is synthesized initially as an inactive proenzyme. Formation of the active enzyme involves a self-maturation process in which the active site pyruvoyl group is generated from an internal serine residue via an autocatalytic post-translational modification. Two non-identical subunits are generated from the proenzyme in this reaction, and the pyruvate is formed at the N-terminus of the alpha chain, which is derived from the carboxyl end of the proenzyme. The post-translation cleavage follows an unusual pathway, termed non-hydrolytic serinolysis, in which the side chain hydroxyl group of the serine supplies its oxygen atom to form the C-terminus of the beta chain, while the remainder of the serine residue undergoes an oxidative deamination to produce ammonia and the pyruvoyl prosthetic group on the alpha chain.

The protein resides in the cell membrane. It carries out the reaction a 1,2-diacyl-sn-glycero-3-phospho-L-serine + H(+) = a 1,2-diacyl-sn-glycero-3-phosphoethanolamine + CO2. It functions in the pathway phospholipid metabolism; phosphatidylethanolamine biosynthesis; phosphatidylethanolamine from CDP-diacylglycerol: step 2/2. Its function is as follows. Catalyzes the formation of phosphatidylethanolamine (PtdEtn) from phosphatidylserine (PtdSer). The sequence is that of Phosphatidylserine decarboxylase proenzyme from Erythrobacter litoralis (strain HTCC2594).